We begin with the raw amino-acid sequence, 276 residues long: 4-hydroxy-tetrahydrodipicolinate reductase (276 aa).

Residues 10–15, Asp36, and 109–111 contribute to the NAD(+) site; these read GALGKM and GTT. His165 serves as the catalytic Proton donor/acceptor. Position 166 (His166) interacts with (S)-2,3,4,5-tetrahydrodipicolinate. Lys169 acts as the Proton donor in catalysis. 175 to 176 is a (S)-2,3,4,5-tetrahydrodipicolinate binding site; sequence GT.

Belongs to the DapB family.

It localises to the cytoplasm. The enzyme catalyses (S)-2,3,4,5-tetrahydrodipicolinate + NAD(+) + H2O = (2S,4S)-4-hydroxy-2,3,4,5-tetrahydrodipicolinate + NADH + H(+). It carries out the reaction (S)-2,3,4,5-tetrahydrodipicolinate + NADP(+) + H2O = (2S,4S)-4-hydroxy-2,3,4,5-tetrahydrodipicolinate + NADPH + H(+). It participates in amino-acid biosynthesis; L-lysine biosynthesis via DAP pathway; (S)-tetrahydrodipicolinate from L-aspartate: step 4/4. Its function is as follows. Catalyzes the conversion of 4-hydroxy-tetrahydrodipicolinate (HTPA) to tetrahydrodipicolinate. The sequence is that of 4-hydroxy-tetrahydrodipicolinate reductase from Prochlorococcus marinus (strain SARG / CCMP1375 / SS120).